The chain runs to 530 residues: Bifunctional purine biosynthesis protein PurH (530 aa).

The MGS-like domain maps to 1-148 (MNNARPIRRA…KNHKDVTIVV (148 aa)).

The protein belongs to the PurH family.

The enzyme catalyses (6R)-10-formyltetrahydrofolate + 5-amino-1-(5-phospho-beta-D-ribosyl)imidazole-4-carboxamide = 5-formamido-1-(5-phospho-D-ribosyl)imidazole-4-carboxamide + (6S)-5,6,7,8-tetrahydrofolate. The catalysed reaction is IMP + H2O = 5-formamido-1-(5-phospho-D-ribosyl)imidazole-4-carboxamide. It participates in purine metabolism; IMP biosynthesis via de novo pathway; 5-formamido-1-(5-phospho-D-ribosyl)imidazole-4-carboxamide from 5-amino-1-(5-phospho-D-ribosyl)imidazole-4-carboxamide (10-formyl THF route): step 1/1. The protein operates within purine metabolism; IMP biosynthesis via de novo pathway; IMP from 5-formamido-1-(5-phospho-D-ribosyl)imidazole-4-carboxamide: step 1/1. The polypeptide is Bifunctional purine biosynthesis protein PurH (Aliivibrio fischeri (strain ATCC 700601 / ES114) (Vibrio fischeri)).